Reading from the N-terminus, the 81-residue chain is ATP synthase subunit c (81 aa).

The next 2 membrane-spanning stretches (helical) occupy residues 7–27 (LVAIASAILIAFGALGTAIGF) and 55–75 (IAGLLDAVPMIGVGIGLFFIF).

Belongs to the ATPase C chain family. In terms of assembly, F-type ATPases have 2 components, F(1) - the catalytic core - and F(0) - the membrane proton channel. F(1) has five subunits: alpha(3), beta(3), gamma(1), delta(1), epsilon(1). F(0) has three main subunits: a(1), b(2) and c(10-14). The alpha and beta chains form an alternating ring which encloses part of the gamma chain. F(1) is attached to F(0) by a central stalk formed by the gamma and epsilon chains, while a peripheral stalk is formed by the delta and b chains.

It is found in the cell inner membrane. Its function is as follows. F(1)F(0) ATP synthase produces ATP from ADP in the presence of a proton or sodium gradient. F-type ATPases consist of two structural domains, F(1) containing the extramembraneous catalytic core and F(0) containing the membrane proton channel, linked together by a central stalk and a peripheral stalk. During catalysis, ATP synthesis in the catalytic domain of F(1) is coupled via a rotary mechanism of the central stalk subunits to proton translocation. Key component of the F(0) channel; it plays a direct role in translocation across the membrane. A homomeric c-ring of between 10-14 subunits forms the central stalk rotor element with the F(1) delta and epsilon subunits. This chain is ATP synthase subunit c, found in Acinetobacter baumannii (strain ACICU).